The primary structure comprises 149 residues: Nucleoside deoxyribosyltransferase (149 aa).

The active-site Nucleophile is glutamate 90.

It belongs to the nucleoside deoxyribosyltransferase family.

The enzyme catalyses 2-deoxy-D-ribosyl-base(1) + base(2) = 2-deoxy-D-ribosyl-base(2) + base(1).. The protein operates within nucleotide metabolism; nucleotide salvage pathway. In terms of biological role, catalyzes the cleavage of the glycosidic bond of 2'-deoxyribonucleosides and the transfer of the deoxyribosyl moiety to an acceptor purine or pyrimidine base. The polypeptide is Nucleoside deoxyribosyltransferase (ntd) (Lactobacillus johnsonii (strain CNCM I-12250 / La1 / NCC 533)).